We begin with the raw amino-acid sequence, 655 residues long: HDA1 complex subunit 3 (655 aa).

Positions 482-632 (HELEVENNLK…KTMDNLENLT (151 aa)) form a coiled coil. The tract at residues 635-655 (RVRTQNGNTKKKSRAKKPGNV) is disordered. The span at 643–655 (TKKKSRAKKPGNV) shows a compositional bias: basic residues.

Belongs to the HDA2/3 family. HDA3 subfamily. In terms of assembly, heterodimer with HDA2. Component of the HDA1 histone deacetylase complex composed of at least one HDA1 homodimer and one HDA2/HDA3 heterodimer. Interacts with HDA1 and HDA3.

It is found in the nucleus. Functionally, required for activity of HDA1 histone deacetylase complex. The HDA1 histone deacetylase complex is responsible for the deacetylation of lysine residues on the N-terminal part of the core histones (H2A, H2B, H3 and H4). Histone deacetylation gives a tag for epigenetic repression and plays an important role in transcriptional regulation, cell cycle progression and developmental events. The polypeptide is HDA1 complex subunit 3 (HDA3) (Saccharomyces cerevisiae (strain ATCC 204508 / S288c) (Baker's yeast)).